The chain runs to 163 residues: Inorganic pyrophosphatase (163 aa).

Residue Glu-9 coordinates Mg(2+). 3 residues coordinate substrate: Lys-17, Arg-31, and Tyr-43. Asp-53, Asp-58, Asp-85, and Asp-90 together coordinate Mg(2+). Asp-90 functions as the Proton acceptor in the catalytic mechanism. Residue Tyr-127 coordinates substrate.

It belongs to the PPase family. As to quaternary structure, homohexamer. Requires Mg(2+) as cofactor.

Its subcellular location is the cytoplasm. The enzyme catalyses diphosphate + H2O = 2 phosphate + H(+). Catalyzes the hydrolysis of inorganic pyrophosphate (PPi) forming two phosphate ions. The sequence is that of Inorganic pyrophosphatase from Leifsonia xyli subsp. xyli (strain CTCB07).